The chain runs to 1138 residues: MEAAPGTAAAAAKPAKSCKKYRMGKRHANIYTYQEPPHSNSDEDISEEKADSQDPEQVFQNIQYQKEVMSNIRCRPWPMRQKLRVLRQAKEIVLKYEGRLTRTRGYQAAGAELWRKFLRLAYNFVVLFIPWEMRIKKIESHFGSGVASYFIFLRWLFGINIVLTIMTGAFVVLPELLAGAPFGSTVSKTIRQEDLKTAQDLDTIWSLGGYLQYSVLFYGYYGSDRKIGKAGYRLPLAYFLVGMAVFAYSFIILLKKMAKNSRMSLASASDENYTFCWRLFCAWDYLIGNPEAAESKAAAIVNSIREAILEEQEKKKSKNLAVTISLRIIANILVLLSLTGSIYIIYFVVDRSQKLENNKRELTLWEKNEVSVVVSLITMIAPSAFELVAALEMYHPRTTLRFQLARVLVLYLGNLYSLIIALLDKVNSMSVTNSIYSIYQVSNNSTPSSATGTPAKEDTLSATISDAQMNSSESHAQSLPTAGSLVNNTASSNSAQNQCWETYVGQEMLKLSIIDMIFTVASILLIDFFRGLCVRYLSDCWCWDLESKFPEYGEFKIAENVLHLVYNQGMIWMGAFFSPCLPAFNVLKLIGLMYLRSWAVLTCNVPHQQVFRASRSNNFYLAMLLFMLFLCMLPTIFAIARYKPSLSCGPFSGQEKIYDIVSETIQNDFPAWFNSVIAYISSPVVVLPALLLLFMLIYYLQSIARSLKFTNNQLRMKIQAERTEDKKKVVQMAVGQNLVDIPDDQIMSDFTQNSEGTRFQSLDGSDKRPDKDGGLISQESSVRASTPRKNGSVLNFESPVSKGTRIQTISQTVPHAVPSTDVARPVNTTPTTSASLTPAPSVSSAQKPRNDHTTNRYPSVVHGSASELCKTKPYTPVTFKKRIGDVHSEPLFRKSIRQVNPDAFGAGAPVFVGRRPHATRYFIVNENEPRKKSARSTSRLQRQFRIEEPEDIVELYPCNVRRYVVQTPQCMYSPHPSEDEEDEEALGRHYVKRSHRPRSLSDLRPAPRFYIGDRADGHVLTSKVHYKSWDDGFELDLDRPPYAYKKVHLKNVEADQHYLEPQVKPKTKHMLEQSLTESDSVSIESSSDPQNSSNDQYIQVIHSKEKYLKPGTKLTKKKSNTNIELNMSEPNELVCSNV.

Residues 1 to 15 (MEAAPGTAAAAAKPA) show a composition bias toward low complexity. Disordered stretches follow at residues 1-20 (MEAA…SCKK) and 29-54 (NIYT…DSQD). At 1–155 (MEAAPGTAAA…VASYFIFLRW (155 aa)) the chain is on the cytoplasmic side. The chain crosses the membrane as a helical span at residues 156–176 (LFGINIVLTIMTGAFVVLPEL). Residues 177–202 (LAGAPFGSTVSKTIRQEDLKTAQDLD) lie on the Extracellular side of the membrane. Residues 203-223 (TIWSLGGYLQYSVLFYGYYGS) traverse the membrane as a helical segment. Residues 224–233 (DRKIGKAGYR) lie on the Cytoplasmic side of the membrane. The chain crosses the membrane as a helical span at residues 234 to 254 (LPLAYFLVGMAVFAYSFIILL). Residues 255–327 (KKMAKNSRMS…KNLAVTISLR (73 aa)) are Extracellular-facing. A glycan (N-linked (GlcNAc...) asparagine) is linked at Asn-272. A helical transmembrane segment spans residues 328 to 348 (IIANILVLLSLTGSIYIIYFV). Residues 349-369 (VDRSQKLENNKRELTLWEKNE) are Cytoplasmic-facing. A helical membrane pass occupies residues 370 to 390 (VSVVVSLITMIAPSAFELVAA). Topologically, residues 391–401 (LEMYHPRTTLR) are extracellular. The chain crosses the membrane as a helical span at residues 402–422 (FQLARVLVLYLGNLYSLIIAL). Residues 423 to 508 (LDKVNSMSVT…CWETYVGQEM (86 aa)) are Cytoplasmic-facing. A helical transmembrane segment spans residues 509-529 (LKLSIIDMIFTVASILLIDFF). Topologically, residues 530–569 (RGLCVRYLSDCWCWDLESKFPEYGEFKIAENVLHLVYNQG) are extracellular. The helical transmembrane segment at 570-590 (MIWMGAFFSPCLPAFNVLKLI) threads the bilayer. Over 591–618 (GLMYLRSWAVLTCNVPHQQVFRASRSNN) the chain is Cytoplasmic. Residues 619-639 (FYLAMLLFMLFLCMLPTIFAI) traverse the membrane as a helical segment. The Extracellular portion of the chain corresponds to 640–676 (ARYKPSLSCGPFSGQEKIYDIVSETIQNDFPAWFNSV). A helical transmembrane segment spans residues 677-697 (IAYISSPVVVLPALLLLFMLI). The Cytoplasmic segment spans residues 698 to 1138 (YYLQSIARSL…EPNELVCSNV (441 aa)). Positions 753-763 (NSEGTRFQSLD) are enriched in polar residues. 3 disordered regions span residues 753–859 (NSEG…RYPS), 973–1005 (SPHP…DLRP), and 1065–1095 (PKTK…SSND). Residues 764–773 (GSDKRPDKDG) are compositionally biased toward basic and acidic residues. Polar residues-rich tracts occupy residues 777–795 (SQES…SVLN) and 804–813 (TRIQTISQTV). The segment covering 828–845 (TTPTTSASLTPAPSVSSA) has biased composition (low complexity). Residues 989-998 (HYVKRSHRPR) show a composition bias toward basic residues. Positions 1074–1095 (SLTESDSVSIESSSDPQNSSND) are enriched in low complexity.

The protein belongs to the TMC family. Expressed in a range of tissues including cerebrum, cerebellum, retina, cochlea, lung, liver and heart. Also expressed in the apical, medial and basal portions of the basillar papilla.

Its subcellular location is the membrane. Its function is as follows. Probable component of an ion channel. The sequence is that of Transmembrane channel-like protein 3 from Gallus gallus (Chicken).